The sequence spans 476 residues: Bifunctional protein HldE (476 aa).

The interval M1–G319 is ribokinase. N195–E198 provides a ligand contact to ATP. The active site involves D264. Residues M344–D476 form a cytidylyltransferase region.

This sequence in the N-terminal section; belongs to the carbohydrate kinase PfkB family. The protein in the C-terminal section; belongs to the cytidylyltransferase family. Homodimer.

It carries out the reaction D-glycero-beta-D-manno-heptose 7-phosphate + ATP = D-glycero-beta-D-manno-heptose 1,7-bisphosphate + ADP + H(+). It catalyses the reaction D-glycero-beta-D-manno-heptose 1-phosphate + ATP + H(+) = ADP-D-glycero-beta-D-manno-heptose + diphosphate. It participates in nucleotide-sugar biosynthesis; ADP-L-glycero-beta-D-manno-heptose biosynthesis; ADP-L-glycero-beta-D-manno-heptose from D-glycero-beta-D-manno-heptose 7-phosphate: step 1/4. The protein operates within nucleotide-sugar biosynthesis; ADP-L-glycero-beta-D-manno-heptose biosynthesis; ADP-L-glycero-beta-D-manno-heptose from D-glycero-beta-D-manno-heptose 7-phosphate: step 3/4. Its function is as follows. Catalyzes the phosphorylation of D-glycero-D-manno-heptose 7-phosphate at the C-1 position to selectively form D-glycero-beta-D-manno-heptose-1,7-bisphosphate. In terms of biological role, catalyzes the ADP transfer from ATP to D-glycero-beta-D-manno-heptose 1-phosphate, yielding ADP-D-glycero-beta-D-manno-heptose. The chain is Bifunctional protein HldE from Actinobacillus succinogenes (strain ATCC 55618 / DSM 22257 / CCUG 43843 / 130Z).